A 431-amino-acid polypeptide reads, in one-letter code: Histidine--tRNA ligase (431 aa).

It belongs to the class-II aminoacyl-tRNA synthetase family. Homodimer.

The protein localises to the cytoplasm. It catalyses the reaction tRNA(His) + L-histidine + ATP = L-histidyl-tRNA(His) + AMP + diphosphate + H(+). The protein is Histidine--tRNA ligase of Ligilactobacillus salivarius (strain UCC118) (Lactobacillus salivarius).